Here is a 459-residue protein sequence, read N- to C-terminus: MSDVPANQLFDAYFMAAPMRAVFSDRGRLQGMLDFEAALARAEARTGVVPATAVAPIEAACRAELYDPLALAEAVATAGNSAIPLVKALGRQVAAGDAEAERYVHLGATSQDAMDSGLVLQLRRALALLEQDLQRLAEVLADQAERHADTPLAGRTWLQHATPVTLGMKLAGLLGALTRHRQRLRELRPRLLVLQFGGASGTLAALGEQALPVAAALAEELGLALPEQPWHTQRDRLVEFASVLGLVAGSLGKFGRDVSLLMQTEAGEVFEPAGAGRGGSSTMPHKRNPVSSAVLIAAATRAPGLVSTLFAAMPQEHERSLGLWHAEWETLPELCCLVAGALQQAIGLLEGLEVDAQRMRRNLGLTHGLVLAEAVSIALARRIGREAAHHLVEQCCRRAVEQRRELRAVLGEEARVSAELSGDELDRLLDPAHYLGQARAWVERALAEHHALGFEPHPA.

This sequence belongs to the class-II fumarase/aspartase family. As to quaternary structure, homotetramer.

It localises to the cytoplasm. It catalyses the reaction 2-(carboxymethyl)-5-oxo-2,5-dihydro-2-furoate = 3-carboxy-cis,cis-muconate + H(+). The protein operates within aromatic compound metabolism; beta-ketoadipate pathway; 5-oxo-4,5-dihydro-2-furylacetate from 3-carboxy-cis,cis-muconate: step 1/2. In terms of biological role, catalyzes an anti cycloisomerization. The polypeptide is 3-carboxy-cis,cis-muconate cycloisomerase (pcaB) (Pseudomonas aeruginosa (strain ATCC 15692 / DSM 22644 / CIP 104116 / JCM 14847 / LMG 12228 / 1C / PRS 101 / PAO1)).